The sequence spans 293 residues: Tumor necrosis factor receptor superfamily member 13B (293 aa).

Topologically, residues 1–165 (MSGLGRSRRG…SADQVALVYS (165 aa)) are extracellular. TNFR-Cys repeat units follow at residues 33 to 67 (SCPE…AFCR) and 70 to 104 (SCRK…AYFC). 6 cysteine pairs are disulfide-bonded: Cys-34-Cys-47, Cys-50-Cys-62, Cys-54-Cys-66, Cys-71-Cys-86, Cys-89-Cys-100, and Cys-93-Cys-104. Residues 115–146 (PPELRRQRSGEVENNSDNSGRYQGLEHRGSEA) are disordered. Polar residues predominate over residues 126–135 (VENNSDNSGR). N-linked (GlcNAc...) asparagine glycosylation occurs at Asn-128. The helical; Signal-anchor for type III membrane protein transmembrane segment at 166-186 (TLGLCLCAVLCCFLVAVACFL) threads the bilayer. Residues 187–293 (KKRGDPCSCQ…VPAQEGGPGA (107 aa)) lie on the Cytoplasmic side of the membrane. The interval 192–226 (PCSCQPRSRPRQSPAKSSQDHAMEAGSPVSTSPEP) is disordered.

Binds TRAF2, TRAF5 and TRAF6. Binds the NH2-terminal domain of CAMLG with its C-terminus. In terms of tissue distribution, highly expressed in spleen, thymus, small intestine and peripheral blood leukocytes. Expressed in resting B-cells and activated T-cells, but not in resting T-cells.

It localises to the membrane. Functionally, receptor for TNFSF13/APRIL and TNFSF13B/TALL1/BAFF/BLYS that binds both ligands with similar high affinity. Mediates calcineurin-dependent activation of NF-AT, as well as activation of NF-kappa-B and AP-1. Involved in the stimulation of B- and T-cell function and the regulation of humoral immunity. This chain is Tumor necrosis factor receptor superfamily member 13B (TNFRSF13B), found in Homo sapiens (Human).